Reading from the N-terminus, the 400-residue chain is Serine/threonine transporter SstT (400 aa).

9 helical membrane passes run 9-29 (LVTQ…VWPA), 36-56 (ILGS…VFVL), 75-95 (VLVL…VASM), 134-154 (ALLE…GLAL), 175-195 (VIQL…ASTF), 209-229 (LLAV…PLIV), 281-301 (IAIP…ISVL), 323-343 (VVAS…LLLI), and 349-369 (LFGI…IIGI).

Belongs to the dicarboxylate/amino acid:cation symporter (DAACS) (TC 2.A.23) family.

Its subcellular location is the cell inner membrane. The enzyme catalyses L-serine(in) + Na(+)(in) = L-serine(out) + Na(+)(out). It catalyses the reaction L-threonine(in) + Na(+)(in) = L-threonine(out) + Na(+)(out). In terms of biological role, involved in the import of serine and threonine into the cell, with the concomitant import of sodium (symport system). The polypeptide is Serine/threonine transporter SstT (Acidovorax sp. (strain JS42)).